We begin with the raw amino-acid sequence, 363 residues long: NADH-quinone oxidoreductase subunit H (363 aa).

Transmembrane regions (helical) follow at residues 62–82 (GPMY…KLLF), 96–116 (FVIA…VVPF), 127–147 (VGLL…ILAG), 163–183 (AAQV…VMIA), 202–222 (FFDW…VSGV), 238–257 (EIVA…LFFL), 264–286 (ILVS…QGWV), 299–319 (KGGW…YIWF), and 339–359 (FIPL…YGVI).

It belongs to the complex I subunit 1 family. NDH-1 is composed of 14 different subunits. Subunits NuoA, H, J, K, L, M, N constitute the membrane sector of the complex.

The protein resides in the cell inner membrane. It carries out the reaction a quinone + NADH + 5 H(+)(in) = a quinol + NAD(+) + 4 H(+)(out). Functionally, NDH-1 shuttles electrons from NADH, via FMN and iron-sulfur (Fe-S) centers, to quinones in the respiratory chain. The immediate electron acceptor for the enzyme in this species is believed to be ubiquinone. Couples the redox reaction to proton translocation (for every two electrons transferred, four hydrogen ions are translocated across the cytoplasmic membrane), and thus conserves the redox energy in a proton gradient. This subunit may bind ubiquinone. The protein is NADH-quinone oxidoreductase subunit H of Xanthomonas axonopodis pv. citri (strain 306).